We begin with the raw amino-acid sequence, 186 residues long: dCTP deaminase (186 aa).

DCTP is bound at residue 107–112 (KSTYAR). E133 serves as the catalytic Proton donor/acceptor. The dCTP site is built by Q152, Y166, and Q176.

Belongs to the dCTP deaminase family. In terms of assembly, homotrimer.

The enzyme catalyses dCTP + H2O + H(+) = dUTP + NH4(+). It participates in pyrimidine metabolism; dUMP biosynthesis; dUMP from dCTP (dUTP route): step 1/2. In terms of biological role, catalyzes the deamination of dCTP to dUTP. This chain is dCTP deaminase, found in Campylobacter fetus subsp. fetus (strain 82-40).